A 74-amino-acid polypeptide reads, in one-letter code: Putative membrane protein insertion efficiency factor (74 aa).

This sequence belongs to the UPF0161 family.

The protein localises to the cell membrane. Could be involved in insertion of integral membrane proteins into the membrane. The protein is Putative membrane protein insertion efficiency factor of Anoxybacillus flavithermus (strain DSM 21510 / WK1).